A 532-amino-acid chain; its full sequence is L-proline--[L-prolyl-carrier protein] ligase (532 aa).

The tract at residues Lys510 to Arg532 is disordered.

This sequence belongs to the ATP-dependent AMP-binding enzyme family.

It carries out the reaction holo-[peptidyl-carrier protein] + L-proline + ATP = L-prolyl-[peptidyl-carrier protein] + AMP + diphosphate. Functionally, involved in the biosynthesis of undecylprodigiosin. Catalyzes the conversion of L-proline to L-prolyl-AMP and the transfer of the L-prolyl group to acyl carrier protein RedO. This Streptomyces coelicolor (strain ATCC BAA-471 / A3(2) / M145) protein is L-proline--[L-prolyl-carrier protein] ligase.